The chain runs to 727 residues: Telomere repeats-binding bouquet formation protein 1 (727 aa).

ARM repeat units follow at residues 101-144 (ELFE…RETG) and 339-382 (NGLP…GEYP). Positions 398–446 (ENNLEEHWRKAKEILHRIEQLEREGNEEEIQRENYQDNISSMNISIQNT) form a coiled coil. Residues 457–468 (RGSKAEDEDKSH) are compositionally biased toward basic and acidic residues. Residues 457-493 (RGSKAEDEDKSHSRQLQSYKSHGVMSKACTNDDQMKT) form a disordered region. Residues 523-662 (QNLHEETTFE…QRLSNESTTP (140 aa)) form an interaction with TERF1 region. A Phosphothreonine modification is found at Thr-648. Positions 666–719 (KKRRIRKNFTEEEVNYLFNGVKKMGNHWNSILWSFPFQQGRKAVDLAHKYHKLT) constitute a Myb-like domain.

This sequence belongs to the TERB1 family. As to quaternary structure, component of the MAJIN-TERB1-TERB2 complex, composed of MAJIN, TERB1 and TERB2. Interacts with TERF1, STAG3 and SUN1. Interacts (via Myb-like domain) with the cohesin complex; probably mediated via interaction with STAG3. Post-translationally, phosphorylated by CDK. Phosphorylation by CDK takes place in late prophase when the cap exchange is prominent. is important for the stabilization of telomere attachment but dispenable for the cap exchange.

It is found in the chromosome. The protein localises to the telomere. The protein resides in the nucleus inner membrane. Meiosis-specific telomere-associated protein involved in meiotic telomere attachment to the nucleus inner membrane, a crucial step for homologous pairing and synapsis. Component of the MAJIN-TERB1-TERB2 complex, which promotes telomere cap exchange by mediating attachment of telomeric DNA to the inner nuclear membrane and replacement of the protective cap of telomeric chromosomes: in early meiosis, the MAJIN-TERB1-TERB2 complex associates with telomeric DNA and the shelterin/telosome complex. During prophase, the complex matures and promotes release of the shelterin/telosome complex from telomeric DNA. In the MAJIN-TERB1-TERB2 complex, TERB1 probably mediates association with the shelterin/telosome complex via interaction with TERF1, promoting priming telomeric DNA attachment'. Promotes telomere association with the nuclear envelope and deposition of the SUN-KASH/LINC complex. Also recruits cohesin to telomeres to develop structural rigidity. The sequence is that of Telomere repeats-binding bouquet formation protein 1 from Homo sapiens (Human).